Reading from the N-terminus, the 938-residue chain is Isoleucine--tRNA ligase (938 aa).

The 'HIGH' region motif lies at 58–68; that stretch reads PYANGSIHIGH. Residue K183 is modified to N6-acetyllysine. L-isoleucyl-5'-AMP is bound at residue E561. The short motif at 602-606 is the 'KMSKS' region element; sequence KMSKS. K605 provides a ligand contact to ATP. Residues C901, C904, C921, and C924 each contribute to the Zn(2+) site.

It belongs to the class-I aminoacyl-tRNA synthetase family. IleS type 1 subfamily. Monomer. Requires Zn(2+) as cofactor.

Its subcellular location is the cytoplasm. The enzyme catalyses tRNA(Ile) + L-isoleucine + ATP = L-isoleucyl-tRNA(Ile) + AMP + diphosphate. Catalyzes the attachment of isoleucine to tRNA(Ile). As IleRS can inadvertently accommodate and process structurally similar amino acids such as valine, to avoid such errors it has two additional distinct tRNA(Ile)-dependent editing activities. One activity is designated as 'pretransfer' editing and involves the hydrolysis of activated Val-AMP. The other activity is designated 'posttransfer' editing and involves deacylation of mischarged Val-tRNA(Ile). This chain is Isoleucine--tRNA ligase, found in Shigella boydii serotype 4 (strain Sb227).